Here is a 236-residue protein sequence, read N- to C-terminus: MAATLLDVCAVVPAAGFGRRMQTECPKQYLSIGNKTILEHSVHALLAHPRVTRVVIAISPGDHRFAQLPLANHPQITVVDGGNERADSVLAGLQAVAEAQWVLVHDAARPCLHQDDLARLLAISENSRVGGILASPVRDTMKRGESGKNAIAHTVERADLWHALTPQFFPRELLHDCLTRALNEGATITDEASALEYCGFHPALVEGRADNIKVTRPEDLALAEFYLTRTIHQEKA.

This sequence belongs to the IspD/TarI cytidylyltransferase family. IspD subfamily. Homodimer.

The catalysed reaction is 2-C-methyl-D-erythritol 4-phosphate + CTP + H(+) = 4-CDP-2-C-methyl-D-erythritol + diphosphate. It functions in the pathway isoprenoid biosynthesis; isopentenyl diphosphate biosynthesis via DXP pathway; isopentenyl diphosphate from 1-deoxy-D-xylulose 5-phosphate: step 2/6. Catalyzes the formation of 4-diphosphocytidyl-2-C-methyl-D-erythritol from CTP and 2-C-methyl-D-erythritol 4-phosphate (MEP). The chain is 2-C-methyl-D-erythritol 4-phosphate cytidylyltransferase from Salmonella paratyphi B (strain ATCC BAA-1250 / SPB7).